A 265-amino-acid chain; its full sequence is Hydroxyethylthiazole kinase (265 aa).

A substrate-binding site is contributed by M41. ATP-binding residues include R117 and S163. G190 is a binding site for substrate.

Belongs to the Thz kinase family. Requires Mg(2+) as cofactor.

It catalyses the reaction 5-(2-hydroxyethyl)-4-methylthiazole + ATP = 4-methyl-5-(2-phosphooxyethyl)-thiazole + ADP + H(+). It functions in the pathway cofactor biosynthesis; thiamine diphosphate biosynthesis; 4-methyl-5-(2-phosphoethyl)-thiazole from 5-(2-hydroxyethyl)-4-methylthiazole: step 1/1. In terms of biological role, catalyzes the phosphorylation of the hydroxyl group of 4-methyl-5-beta-hydroxyethylthiazole (THZ). This Pediococcus pentosaceus (strain ATCC 25745 / CCUG 21536 / LMG 10740 / 183-1w) protein is Hydroxyethylthiazole kinase.